The primary structure comprises 162 residues: Protein-export protein SecB (162 aa).

The protein belongs to the SecB family. In terms of assembly, homotetramer, a dimer of dimers. One homotetramer interacts with 1 SecA dimer.

It is found in the cytoplasm. In terms of biological role, one of the proteins required for the normal export of preproteins out of the cell cytoplasm. It is a molecular chaperone that binds to a subset of precursor proteins, maintaining them in a translocation-competent state. It also specifically binds to its receptor SecA. The sequence is that of Protein-export protein SecB from Bradyrhizobium sp. (strain BTAi1 / ATCC BAA-1182).